We begin with the raw amino-acid sequence, 244 residues long: tRNA pseudouridine synthase A (244 aa).

Catalysis depends on D52, which acts as the Nucleophile. Y110 is a substrate binding site.

It belongs to the tRNA pseudouridine synthase TruA family. Homodimer.

The catalysed reaction is uridine(38/39/40) in tRNA = pseudouridine(38/39/40) in tRNA. Functionally, formation of pseudouridine at positions 38, 39 and 40 in the anticodon stem and loop of transfer RNAs. The sequence is that of tRNA pseudouridine synthase A from Caldicellulosiruptor bescii (strain ATCC BAA-1888 / DSM 6725 / KCTC 15123 / Z-1320) (Anaerocellum thermophilum).